Reading from the N-terminus, the 346-residue chain is Methylthioribose-1-phosphate isomerase (346 aa).

Residues Arg46 to Ala48, Arg89, and Gln196 each bind substrate. Asp237 acts as the Proton donor in catalysis. Residue Asn247–Lys248 participates in substrate binding.

This sequence belongs to the eIF-2B alpha/beta/delta subunits family. MtnA subfamily.

The catalysed reaction is 5-(methylsulfanyl)-alpha-D-ribose 1-phosphate = 5-(methylsulfanyl)-D-ribulose 1-phosphate. The protein operates within amino-acid biosynthesis; L-methionine biosynthesis via salvage pathway; L-methionine from S-methyl-5-thio-alpha-D-ribose 1-phosphate: step 1/6. Its function is as follows. Catalyzes the interconversion of methylthioribose-1-phosphate (MTR-1-P) into methylthioribulose-1-phosphate (MTRu-1-P). In Geotalea uraniireducens (strain Rf4) (Geobacter uraniireducens), this protein is Methylthioribose-1-phosphate isomerase.